A 313-amino-acid chain; its full sequence is 4-hydroxy-3-methylbut-2-enyl diphosphate reductase (313 aa).

A [4Fe-4S] cluster-binding site is contributed by Cys14. Positions 43 and 76 each coordinate (2E)-4-hydroxy-3-methylbut-2-enyl diphosphate. Dimethylallyl diphosphate contacts are provided by His43 and His76. Isopentenyl diphosphate contacts are provided by His43 and His76. Cys98 lines the [4Fe-4S] cluster pocket. His126 is a binding site for (2E)-4-hydroxy-3-methylbut-2-enyl diphosphate. Position 126 (His126) interacts with dimethylallyl diphosphate. His126 is a binding site for isopentenyl diphosphate. The Proton donor role is filled by Glu128. Thr166 serves as a coordination point for (2E)-4-hydroxy-3-methylbut-2-enyl diphosphate. Cys196 contacts [4Fe-4S] cluster. Residues Ser224, Ser225, Asn226, and Ser269 each contribute to the (2E)-4-hydroxy-3-methylbut-2-enyl diphosphate site. Ser224, Ser225, Asn226, and Ser269 together coordinate dimethylallyl diphosphate. The isopentenyl diphosphate site is built by Ser224, Ser225, Asn226, and Ser269.

The protein belongs to the IspH family. Requires [4Fe-4S] cluster as cofactor.

The catalysed reaction is isopentenyl diphosphate + 2 oxidized [2Fe-2S]-[ferredoxin] + H2O = (2E)-4-hydroxy-3-methylbut-2-enyl diphosphate + 2 reduced [2Fe-2S]-[ferredoxin] + 2 H(+). It carries out the reaction dimethylallyl diphosphate + 2 oxidized [2Fe-2S]-[ferredoxin] + H2O = (2E)-4-hydroxy-3-methylbut-2-enyl diphosphate + 2 reduced [2Fe-2S]-[ferredoxin] + 2 H(+). It functions in the pathway isoprenoid biosynthesis; dimethylallyl diphosphate biosynthesis; dimethylallyl diphosphate from (2E)-4-hydroxy-3-methylbutenyl diphosphate: step 1/1. It participates in isoprenoid biosynthesis; isopentenyl diphosphate biosynthesis via DXP pathway; isopentenyl diphosphate from 1-deoxy-D-xylulose 5-phosphate: step 6/6. Functionally, catalyzes the conversion of 1-hydroxy-2-methyl-2-(E)-butenyl 4-diphosphate (HMBPP) into a mixture of isopentenyl diphosphate (IPP) and dimethylallyl diphosphate (DMAPP). Acts in the terminal step of the DOXP/MEP pathway for isoprenoid precursor biosynthesis. In Tropheryma whipplei (strain TW08/27) (Whipple's bacillus), this protein is 4-hydroxy-3-methylbut-2-enyl diphosphate reductase.